Here is an 89-residue protein sequence, read N- to C-terminus: Cell division topological specificity factor (89 aa).

This sequence belongs to the MinE family.

Functionally, prevents the cell division inhibition by proteins MinC and MinD at internal division sites while permitting inhibition at polar sites. This ensures cell division at the proper site by restricting the formation of a division septum at the midpoint of the long axis of the cell. The protein is Cell division topological specificity factor of Pectobacterium carotovorum subsp. carotovorum (strain PC1).